The primary structure comprises 374 residues: Pyruvate dehydrogenase E1 component subunit beta-1, mitochondrial (374 aa).

The transit peptide at 1–34 directs the protein to the mitochondrion; that stretch reads MLGIARRRLGSGCALGQLMQALRPAAAAAAARTY. E97 provides a ligand contact to thiamine diphosphate. 4 residues coordinate K(+): I150, A198, I199, and D201.

In terms of assembly, tetramer of 2 alpha and 2 beta subunits. The cofactor is thiamine diphosphate.

It localises to the mitochondrion matrix. The catalysed reaction is N(6)-[(R)-lipoyl]-L-lysyl-[protein] + pyruvate + H(+) = N(6)-[(R)-S(8)-acetyldihydrolipoyl]-L-lysyl-[protein] + CO2. Functionally, the pyruvate dehydrogenase complex catalyzes the overall conversion of pyruvate to acetyl-CoA and CO(2). It contains multiple copies of three enzymatic components: pyruvate dehydrogenase (E1), dihydrolipoamide acetyltransferase (E2) and lipoamide dehydrogenase (E3). In Oryza sativa subsp. japonica (Rice), this protein is Pyruvate dehydrogenase E1 component subunit beta-1, mitochondrial.